Consider the following 93-residue polypeptide: Large ribosomal subunit protein bL31B (93 aa).

This sequence belongs to the bacterial ribosomal protein bL31 family. Type B subfamily. In terms of assembly, part of the 50S ribosomal subunit.

This Psychrobacter arcticus (strain DSM 17307 / VKM B-2377 / 273-4) protein is Large ribosomal subunit protein bL31B.